Reading from the N-terminus, the 283-residue chain is Putative cuticle collagen 79 (283 aa).

The segment at 59–283 (FKQQSSPPSP…ARSISKVAIQ (225 aa)) is disordered. Triple-helical region regions lie at residues 94-122 (GPPGPPGEKGNDGVDGVDGIPGFPGENGG), 139-201 (GPRG…PGRK), and 204-269 (GEAG…DGAY). A compositionally biased stretch (pro residues) spans 137-146 (PPGPRGPPGP). A compositionally biased stretch (acidic residues) spans 226 to 240 (TDGDDGVDGQPGDEG). A compositionally biased stretch (low complexity) spans 253–265 (PQGEQGTEGQPGT).

Belongs to the cuticular collagen family. As to quaternary structure, collagen polypeptide chains are complexed within the cuticle by disulfide bonds and other types of covalent cross-links.

Functionally, nematode cuticles are composed largely of collagen-like proteins. The cuticle functions both as an exoskeleton and as a barrier to protect the worm from its environment. The sequence is that of Putative cuticle collagen 79 (col-79) from Caenorhabditis elegans.